A 954-amino-acid polypeptide reads, in one-letter code: Glycine dehydrogenase (decarboxylating) (954 aa).

Lysine 704 is modified (N6-(pyridoxal phosphate)lysine).

This sequence belongs to the GcvP family. The glycine cleavage system is composed of four proteins: P, T, L and H. The cofactor is pyridoxal 5'-phosphate.

The enzyme catalyses N(6)-[(R)-lipoyl]-L-lysyl-[glycine-cleavage complex H protein] + glycine + H(+) = N(6)-[(R)-S(8)-aminomethyldihydrolipoyl]-L-lysyl-[glycine-cleavage complex H protein] + CO2. In terms of biological role, the glycine cleavage system catalyzes the degradation of glycine. The P protein binds the alpha-amino group of glycine through its pyridoxal phosphate cofactor; CO(2) is released and the remaining methylamine moiety is then transferred to the lipoamide cofactor of the H protein. The polypeptide is Glycine dehydrogenase (decarboxylating) (Rhizobium etli (strain CIAT 652)).